The primary structure comprises 77 residues: Protein ImpC (77 aa).

The protein belongs to the DinI family.

In Salmonella typhimurium, this protein is Protein ImpC (impC).